We begin with the raw amino-acid sequence, 321 residues long: L-carnitine dehydrogenase (321 aa).

14 to 19 (GAGVIG) provides a ligand contact to NAD(+).

This sequence belongs to the 3-hydroxyacyl-CoA dehydrogenase family. L-carnitine dehydrogenase subfamily. As to quaternary structure, homodimer.

It is found in the cytoplasm. The enzyme catalyses carnitine + NAD(+) = 3-dehydrocarnitine + NADH + H(+). The protein operates within amine and polyamine metabolism; carnitine metabolism. In terms of biological role, catalyzes the NAD(+)-dependent oxidation of L-carnitine to 3-dehydrocarnitine. The chain is L-carnitine dehydrogenase from Burkholderia mallei (strain ATCC 23344).